A 257-amino-acid polypeptide reads, in one-letter code: Imidazole glycerol phosphate synthase subunit HisF (257 aa).

Catalysis depends on residues Asp-11 and Asp-130.

The protein belongs to the HisA/HisF family. Heterodimer of HisH and HisF.

The protein resides in the cytoplasm. It carries out the reaction 5-[(5-phospho-1-deoxy-D-ribulos-1-ylimino)methylamino]-1-(5-phospho-beta-D-ribosyl)imidazole-4-carboxamide + L-glutamine = D-erythro-1-(imidazol-4-yl)glycerol 3-phosphate + 5-amino-1-(5-phospho-beta-D-ribosyl)imidazole-4-carboxamide + L-glutamate + H(+). It functions in the pathway amino-acid biosynthesis; L-histidine biosynthesis; L-histidine from 5-phospho-alpha-D-ribose 1-diphosphate: step 5/9. IGPS catalyzes the conversion of PRFAR and glutamine to IGP, AICAR and glutamate. The HisF subunit catalyzes the cyclization activity that produces IGP and AICAR from PRFAR using the ammonia provided by the HisH subunit. The sequence is that of Imidazole glycerol phosphate synthase subunit HisF from Aeromonas salmonicida (strain A449).